A 221-amino-acid polypeptide reads, in one-letter code: Ribonuclease T (221 aa).

The Exonuclease domain maps to 20–194; the sequence is VVIDIETAGF…YDTLQTANLF (175 aa). Mg(2+)-binding residues include Asp23, Glu25, His181, and Asp186. Residue His181 is the Proton donor/acceptor of the active site.

It belongs to the RNase T family. Homodimer. Mg(2+) is required as a cofactor.

Trims short 3' overhangs of a variety of RNA species, leaving a one or two nucleotide 3' overhang. Responsible for the end-turnover of tRNA: specifically removes the terminal AMP residue from uncharged tRNA (tRNA-C-C-A). Also appears to be involved in tRNA biosynthesis. In Buchnera aphidicola subsp. Acyrthosiphon pisum (strain APS) (Acyrthosiphon pisum symbiotic bacterium), this protein is Ribonuclease T.